Reading from the N-terminus, the 192-residue chain is Adenylate kinase (192 aa).

Glycine 10–threonine 18 is an ATP binding site.

It belongs to the archaeal adenylate kinase family. Monomer.

It is found in the cytoplasm. It catalyses the reaction AMP + ATP = 2 ADP. The protein is Adenylate kinase of Methanococcus maripaludis (strain DSM 14266 / JCM 13030 / NBRC 101832 / S2 / LL).